The primary structure comprises 79 residues: MKYRKQLLVLFFAYFLVVNESEAFLGSLFSIGSKLLPGVIKLFQRKKQRALMKRDLQDRMDPYQRNLKLDRYLKQLALD.

The signal sequence occupies residues 1–23; that stretch reads MKYRKQLLVLFFAYFLVVNESEA. Positions 49–79 are excised as a propeptide; the sequence is RALMKRDLQDRMDPYQRNLKLDRYLKQLALD.

The protein belongs to the non-disulfide-bridged peptide (NDBP) superfamily. Medium-length antimicrobial peptide (group 3) family. In terms of tissue distribution, expressed by the venom gland.

It localises to the secreted. The protein resides in the target cell membrane. In terms of biological role, antimicrobial peptide that may act by disrupting the integrity of the bacterial cell membrane. Has antibacterial activity against Gram-negative bacterium E.coli NBRC 3972 (MIC=10 uM) and against Gram-positive bacteria S.aureus NBRC 13276 (MIC=2.5-5 uM) and B.subtilis NBRC 3009 (MIC=0.5-1 uM). Also shows potent activity against antibiotic-sensitive and -resistant Acinetobacter baumannii (MIC=1.8-3.6 uM). Shows cytolytic activity against human and sheep erythrocytes. Toxic to cricket A.domestica. This is Peptide Im-5 from Isometrus maculatus (Lesser brown scorpion).